The primary structure comprises 140 residues: MTSFRLANLTVFLVLLFCFMRGVHSADDLSKIPEIKGYELHCIEASGITESSAKKLRNGDDIASPDQSIKCYVQCFFSKLRLMNEKGVVQKDKVLSLLGKLMEEDKAKKLAEKCDLRRTNPCDTAYAMYDCYRQNKAKLL.

The first 25 residues, 1–25, serve as a signal peptide directing secretion; it reads MTSFRLANLTVFLVLLFCFMRGVHS.

It belongs to the PBP/GOBP family. In terms of tissue distribution, high-level expression in female mouth parts, particularly in the proboscis (at protein level). Low-level expression in female antenna (at protein level). Female salivary gland. Female chemosensory organs: antenna, palp and proboscis. Male antenna, wing and maxillary palp. Expressed at higher levels in male tissues compared to female tissues. Not detected in midgut.

It localises to the secreted. In terms of biological role, involved in modulation of blood-feeding behavior and capacity in female mosquitoes. Required for normal oviposition. Required for normal fecundity and fertility of female mosquitoes. Required for normal expression of VGA1 gene, which encodes the egg yolk protein vitellogenin-A1. Required for normal female longevity when mosquitoes are maintained on regular sugar meal. Functionally, (Microbial infection) Facilitates shedding of dengue virus type 2 particles into mosquito saliva. Does not affect dengue virus type 2 replication or infection prevalence in midgut and salivary glands at 14 days after blood feeding. Its function is as follows. (Microbial infection) Facilitates shedding of Zika virus particles into mosquito saliva. Does not affect Zika virus replication or infection prevalence in midgut and salivary glands at 14 days after blood feeding. The protein is Odorant-binding protein 10 of Aedes aegypti (Yellowfever mosquito).